Reading from the N-terminus, the 147-residue chain is Large ribosomal subunit protein bL9 (147 aa).

It belongs to the bacterial ribosomal protein bL9 family.

Its function is as follows. Binds to the 23S rRNA. This chain is Large ribosomal subunit protein bL9, found in Cytophaga hutchinsonii (strain ATCC 33406 / DSM 1761 / CIP 103989 / NBRC 15051 / NCIMB 9469 / D465).